Here is a 654-residue protein sequence, read N- to C-terminus: MSGFVGILVSDPWLQNQFTQVELRSLKSHFTSMKRESGKLTVSDLASRMGKSKVVGDQNLSNEERATLIQNFHPNLNDEVDFEFYLRIYLNLQAHVNAIIGSGVKNSSAFLKAATTTLLHTISDSEKSSYVAHINNYLSGDEFLNKCLPINPSSNDLFEVAKDGVLLCKLINVAVPGTIDERAINTKSMLNPWERNENHTLCLNSAKAIGCTVVNIGTQDIIEGRRHLVLGVISQIIKIQLLADLNLKKTPQLVELVGDSKDVEELMSLPPEKILLRWMNFQLRKTEYKKTVTNFSSDVKDAEAYTNLLNVLAPEHKNPSHLAVKSSFERAKLVLEHADKMGCRRYLTAKDIVEGSPNLNLAFVAHIFQHRNGLSTQTKQISFLENLADDIQISREEKAFRFWINSFDGSVYINNVFEDLRDGWILLQTLDKVSPGIVNWKVSSKPPIKLPFKKVENCNQVVKLGKQLKFSLVNIAGNDIVQGNKKLILAYLWQLMRYNILQLLKNLRLHSNGKEITDADILEWANAKVRNNGCKTRMYSFRDKSLSDGVFFLELLSSVQPRSVNWSLVTNGVTDEEKKMNATYVISIARKLGCSIFLLPEDIIEVNQKMMLTLTASIMYWTLKQPLHLNKPIGSPDSHNGSLLDDSTSDSSIE.

Calponin-homology (CH) domains lie at 124–241, 269–372, 394–500, and 515–623; these read DSEK…KIQL, LPPE…QHRN, SREE…RYNI, and EITD…YWTL. 2 actin-binding regions span residues 124–372 and 394–623; these read DSEK…QHRN and SREE…YWTL.

As to quaternary structure, interacts with F-actin.

The protein resides in the cytoplasm. It localises to the cytoskeleton. Cross-links actin filaments (F-actin). Stabilizes and prevents F-actin depolymerization mediated by profilin. May regulate actin cytoarchitecture, cell cycle, cell division, cell elongation and cytoplasmic tractus. This is Fimbrin-2 from Arabidopsis thaliana (Mouse-ear cress).